The chain runs to 346 residues: Selenide, water dikinase (346 aa).

Sec17 is a catalytic residue. Sec17 is a non-standard amino acid (selenocysteine). ATP is bound by residues Lys20 and Thr47–Asp49. Residue Asp50 participates in Mg(2+) binding. ATP is bound by residues Asp67, Asp90, and Gly138 to Thr140. Position 90 (Asp90) interacts with Mg(2+). Mg(2+) is bound at residue Asp226.

Belongs to the selenophosphate synthase 1 family. Class I subfamily. Homodimer. It depends on Mg(2+) as a cofactor.

It catalyses the reaction hydrogenselenide + ATP + H2O = selenophosphate + AMP + phosphate + 2 H(+). Synthesizes selenophosphate from selenide and ATP. This Trichlorobacter lovleyi (strain ATCC BAA-1151 / DSM 17278 / SZ) (Geobacter lovleyi) protein is Selenide, water dikinase.